Here is a 252-residue protein sequence, read N- to C-terminus: MPIGSIAIGAPGEASHPDTIKASLAEFISTLIFVFAGEGSGMAFNKLTNDGSTTPAGLVAASLAHGFALFVAVSVGANISGGHVNPAVTFGAFLGGNISLIRGILYWIAQLLGSVVACLLLKLATGGLETSAFSLSSDVSVWNAVVFEIVMTFGLVYTVYATAVDPRKGDLGVIAPIAIGFIVGANILAGGAFDGASMNPAVSFGPAVVSWTWDNHWVYWVGPLIGAAIAALVYDGVFIGQATHEQLPPSDY.

At methionine 1 to serine 23 the chain is on the cytoplasmic side. Residues leucine 24–phenylalanine 44 form a helical membrane-spanning segment. Residues asparagine 45–proline 55 lie on the Vacuolar side of the membrane. Residues alanine 56–glycine 76 traverse the membrane as a helical segment. The Cytoplasmic segment spans residues alanine 77 to glycine 103. Residues asparagine 85–alanine 87 carry the NPA 1 motif. The helical transmembrane segment at isoleucine 104–alanine 124 threads the bilayer. At threonine 125 to asparagine 143 the chain is on the vacuolar side. A helical membrane pass occupies residues alanine 144–valine 164. Topologically, residues aspartate 165–glycine 172 are cytoplasmic. Residues valine 173 to phenylalanine 193 form a helical membrane-spanning segment. At aspartate 194 to tyrosine 219 the chain is on the vacuolar side. Residues asparagine 199–alanine 201 carry the NPA 2 motif. The chain crosses the membrane as a helical span at residues tryptophan 220–glycine 240. Residues glutamine 241 to tyrosine 252 are Cytoplasmic-facing.

Belongs to the MIP/aquaporin (TC 1.A.8) family. TIP (TC 1.A.8.10) subfamily. In terms of tissue distribution, mainly expressed in fruits and leaves, and, to a lower extent, in roots, stems and flowers.

The protein resides in the vacuole membrane. Water channel required to facilitate the transport of water from the vacuolar compartment to the cytoplasm. The protein is Aquaporin TIP1-2 of Musa acuminata (Banana).